We begin with the raw amino-acid sequence, 468 residues long: Elongation factor 1-alpha (468 aa).

Positions 6-244 (KPHINIVVIG…DNIPLPARPS (239 aa)) constitute a tr-type G domain. The G1 stretch occupies residues 15-22 (GHVDSGKS). 15 to 22 (GHVDSGKS) is a GTP binding site. The segment at 71–75 (GITID) is G2. Residues 92–95 (DAPG) are G3. GTP contacts are provided by residues 92–96 (DAPGH) and 154–157 (NKID). Residues 154 to 157 (NKID) form a G4 region. Positions 195–197 (SGW) are G5. A 5-glutamyl glycerylphosphorylethanolamine mark is found at E303 and E376.

Belongs to the TRAFAC class translation factor GTPase superfamily. Classic translation factor GTPase family. EF-Tu/EF-1A subfamily.

It is found in the cytoplasm. In terms of biological role, this protein promotes the GTP-dependent binding of aminoacyl-tRNA to the A-site of ribosomes during protein biosynthesis. In Hydra vulgaris (Hydra), this protein is Elongation factor 1-alpha.